A 272-amino-acid polypeptide reads, in one-letter code: HMP-PP phosphatase (272 aa).

The active-site Nucleophile is D8. Mg(2+)-binding residues include D8, D10, and D212.

It belongs to the HAD-like hydrolase superfamily. Cof family. The cofactor is Mg(2+).

It carries out the reaction 4-amino-2-methyl-5-(diphosphooxymethyl)pyrimidine + H2O = 4-amino-2-methyl-5-(phosphooxymethyl)pyrimidine + phosphate + H(+). In terms of biological role, catalyzes the hydrolysis of 4-amino-2-methyl-5-hydroxymethylpyrimidine pyrophosphate (HMP-PP) to 4-amino-2-methyl-5-hydroxymethylpyrimidine phosphate (HMP-P). The polypeptide is HMP-PP phosphatase (Salmonella enteritidis PT4 (strain P125109)).